The sequence spans 215 residues: 3-demethoxyubiquinol 3-hydroxylase (215 aa).

Fe cation is bound by residues E64, E94, H97, E146, E178, and H181.

The protein belongs to the COQ7 family. Fe cation is required as a cofactor.

It localises to the cell membrane. It carries out the reaction a 5-methoxy-2-methyl-3-(all-trans-polyprenyl)benzene-1,4-diol + AH2 + O2 = a 3-demethylubiquinol + A + H2O. It participates in cofactor biosynthesis; ubiquinone biosynthesis. Its function is as follows. Catalyzes the hydroxylation of 2-nonaprenyl-3-methyl-6-methoxy-1,4-benzoquinol during ubiquinone biosynthesis. The sequence is that of 3-demethoxyubiquinol 3-hydroxylase from Pseudomonas fluorescens (strain ATCC BAA-477 / NRRL B-23932 / Pf-5).